A 462-amino-acid chain; its full sequence is Elongation factor 1-alpha 1 (462 aa).

Gly2 is subject to N,N,N-trimethylglycine. The tr-type G domain maps to 5-242 (KTHINIVVIG…DCILPPTRPT (238 aa)). Residues 14–21 (GHVDSGKS) are G1. Residue 14-21 (GHVDSGKS) coordinates GTP. Lys36 carries the N6,N6,N6-trimethyllysine; alternate modification. Position 36 is an N6,N6-dimethyllysine; alternate (Lys36). Lys36 carries the post-translational modification N6-methyllysine; alternate. Lys55 is subject to N6,N6-dimethyllysine. The interval 70–74 (GITID) is G2. An N6,N6,N6-trimethyllysine; by EEF1AKMT1 modification is found at Lys79. The segment at 91 to 94 (DAPG) is G3. 153 to 156 (NKMD) serves as a coordination point for GTP. The interval 153–156 (NKMD) is G4. At Lys165 the chain carries N6,N6,N6-trimethyllysine; alternate; by EEF1AKMT3. Lys165 is modified (N6,N6-dimethyllysine; alternate; by EEF1AKMT3). N6-acetyllysine; alternate is present on Lys165. Lys165 is modified (N6-methyllysine; alternate; by EEF1AKMT3). Lys172 bears the N6-acetyllysine mark. 194-196 (SGW) is a binding site for GTP. A G5 region spans residues 194-196 (SGW). At Lys273 the chain carries N6-acetyllysine. Phosphoserine; by TGFBR1 is present on Ser300. Position 301 is a 5-glutamyl glycerylphosphorylethanolamine (Glu301). An N6,N6,N6-trimethyllysine; by EEF1AKMT2 modification is found at Lys318. The residue at position 374 (Glu374) is a 5-glutamyl glycerylphosphorylethanolamine. Residue Lys385 forms a Glycyl lysine isopeptide (Lys-Gly) (interchain with G-Cter in ubiquitin) linkage. At Lys392 the chain carries N6-acetyllysine; alternate. Lys392 is modified (N6-succinyllysine; alternate). Phosphothreonine; by PASK is present on Thr432. The residue at position 439 (Lys439) is an N6-acetyllysine.

This sequence belongs to the TRAFAC class translation factor GTPase superfamily. Classic translation factor GTPase family. EF-Tu/EF-1A subfamily. Found in a nuclear export complex with XPO5, EEF1A1, Ran and aminoacylated tRNA. Interacts with PARP1 and TXK. Interacts with KARS1. May interact with ERGIC2. Interacts with IFIT1 (via TPR repeats 4-7). Interacts with DLC1, facilitating distribution to the membrane periphery and ruffles upon growth factor stimulation. Interacts with ZPR1; the interaction occurs in a epidermal growth factor (EGF)-dependent manner. Interacts with PPP1R16B. Interacts with SPHK1 and SPHK2; both interactions increase SPHK1 and SPHK2 kinase activity. Interacts with guanyl-nucleotide exchange factor EEF1B2. Interacts (via middle-region) with HTATIP2 (via N-terminus); the interaction is direct and competes with EEF1A1 binding to guanyl-nucleotide exchange factor EEF1B2, thereby inhibiting GDP for GTP exchange and reactivation of EEF1A1. Interacts with tRNA. In terms of processing, ISGylated. Phosphorylated by TXK. Phosphorylation by PASK increases translation efficiency. Phosphorylated by ROCK2. Phosphorylation by TGFBR1 inhibits translation elongation. Post-translationally, trimethylated at Lys-79 by EEF1AKMT1. Methylated at Lys-165 by EEF1AKMT3, methylation by EEF1AKMT3 is dynamic as well as inducible by stress conditions, such as ER-stress, and plays a regulatory role on mRNA translation. Trimethylated at Lys-318 by EEF1AKMT2. Mono-, di-, and trimethylated at Lys-36 by EEF1AKMT4; trimethylated form is predominant. Methylation by EEF1AKMT4 contributes to the fine-tuning of translation rates for a subset of tRNAs. Trimethylated at Gly-2 by METTL13. Mono- and dimethylated at Lys-55 by METTL13; dimethylated form is predominant. In terms of processing, ubiquitinated at Lys-385 by RNF14 in response to ribosome collisions (ribosome stalling), leading to its degradation by the proteasome and rescue of stalled ribosomes.

Its subcellular location is the cytoplasm. The protein resides in the nucleus. It is found in the nucleolus. The protein localises to the cell membrane. The catalysed reaction is GTP + H2O = GDP + phosphate + H(+). Its function is as follows. Translation elongation factor that catalyzes the GTP-dependent binding of aminoacyl-tRNA (aa-tRNA) to the A-site of ribosomes during the elongation phase of protein synthesis. Base pairing between the mRNA codon and the aa-tRNA anticodon promotes GTP hydrolysis, releasing the aa-tRNA from EEF1A1 and allowing its accommodation into the ribosome. The growing protein chain is subsequently transferred from the P-site peptidyl tRNA to the A-site aa-tRNA, extending it by one amino acid through ribosome-catalyzed peptide bond formation. Also plays a role in the positive regulation of IFNG transcription in T-helper 1 cells as part of an IFNG promoter-binding complex with TXK and PARP1. Also plays a role in cytoskeleton organization by promoting actin bundling. This Bos taurus (Bovine) protein is Elongation factor 1-alpha 1 (EEF1A1).